Consider the following 203-residue polypeptide: Protein GrpE (203 aa).

This sequence belongs to the GrpE family. In terms of assembly, homodimer.

It localises to the cytoplasm. Participates actively in the response to hyperosmotic and heat shock by preventing the aggregation of stress-denatured proteins, in association with DnaK and GrpE. It is the nucleotide exchange factor for DnaK and may function as a thermosensor. Unfolded proteins bind initially to DnaJ; upon interaction with the DnaJ-bound protein, DnaK hydrolyzes its bound ATP, resulting in the formation of a stable complex. GrpE releases ADP from DnaK; ATP binding to DnaK triggers the release of the substrate protein, thus completing the reaction cycle. Several rounds of ATP-dependent interactions between DnaJ, DnaK and GrpE are required for fully efficient folding. This is Protein GrpE from Pseudoalteromonas translucida (strain TAC 125).